A 203-amino-acid chain; its full sequence is Guanylate kinase (203 aa).

The region spanning 4 to 183 (GKLFVISAPS…ASTLLKSIIW (180 aa)) is the Guanylate kinase-like domain. 11–18 (APSGAGKT) serves as a coordination point for ATP.

It belongs to the guanylate kinase family.

Its subcellular location is the cytoplasm. It catalyses the reaction GMP + ATP = GDP + ADP. Functionally, essential for recycling GMP and indirectly, cGMP. The polypeptide is Guanylate kinase (Desulfotalea psychrophila (strain LSv54 / DSM 12343)).